We begin with the raw amino-acid sequence, 89 residues long: Small ribosomal subunit protein uS17 (89 aa).

This sequence belongs to the universal ribosomal protein uS17 family. In terms of assembly, part of the 30S ribosomal subunit.

In terms of biological role, one of the primary rRNA binding proteins, it binds specifically to the 5'-end of 16S ribosomal RNA. The polypeptide is Small ribosomal subunit protein uS17 (Polynucleobacter asymbioticus (strain DSM 18221 / CIP 109841 / QLW-P1DMWA-1) (Polynucleobacter necessarius subsp. asymbioticus)).